The sequence spans 456 residues: Chromosomal replication initiator protein DnaA (456 aa).

The tract at residues 1 to 73 (MEIYLDNLWD…ADVVHDILGY (73 aa)) is domain I, interacts with DnaA modulators. Residues 73–117 (YPVEIYLTTFLVEDSRKNDSGLIWSEHKSVNILGENLSIPKPLPA) form a domain II region. Residues 118 to 334 (NLNAKYMFSR…GALTRVVTYI (217 aa)) are domain III, AAA+ region. ATP contacts are provided by glycine 162, glycine 164, lysine 165, and threonine 166. The domain IV, binds dsDNA stretch occupies residues 335 to 456 (SISGLPMTVE…SDRINFSSRH (122 aa)).

This sequence belongs to the DnaA family. Oligomerizes as a right-handed, spiral filament on DNA at oriC.

It is found in the cytoplasm. Functionally, plays an essential role in the initiation and regulation of chromosomal replication. ATP-DnaA binds to the origin of replication (oriC) to initiate formation of the DNA replication initiation complex once per cell cycle. Binds the DnaA box (a 9 base pair repeat at the origin) and separates the double-stranded (ds)DNA. Forms a right-handed helical filament on oriC DNA; dsDNA binds to the exterior of the filament while single-stranded (ss)DNA is stabiized in the filament's interior. The ATP-DnaA-oriC complex binds and stabilizes one strand of the AT-rich DNA unwinding element (DUE), permitting loading of DNA polymerase. After initiation quickly degrades to an ADP-DnaA complex that is not apt for DNA replication. Binds acidic phospholipids. This is Chromosomal replication initiator protein DnaA from Trichodesmium erythraeum (strain IMS101).